The sequence spans 159 residues: Cell division protein SepF (159 aa).

Positions 23 to 69 (DYIEEDEEQKPASKSAFDSDHTVTPLASTTAPAASSTTKPFPGGRVN) are disordered. Residues 44–64 (TVTPLASTTAPAASSTTKPFP) are compositionally biased toward low complexity.

It belongs to the SepF family. As to quaternary structure, homodimer. Interacts with FtsZ.

It localises to the cytoplasm. Functionally, cell division protein that is part of the divisome complex and is recruited early to the Z-ring. Probably stimulates Z-ring formation, perhaps through the cross-linking of FtsZ protofilaments. Its function overlaps with FtsA. The chain is Cell division protein SepF from Bifidobacterium longum (strain DJO10A).